The chain runs to 307 residues: Glutathione synthetase (307 aa).

In terms of domain architecture, ATP-grasp spans 120–304 (KLGALRFSRW…LADQTIERLR (185 aa)). 146-202 (AREQGDVVLKPLGGRAGLGVIRVQAEAPGLKALLELVTEQERLPVMAQRFLPDVTEG) serves as a coordination point for ATP. Mg(2+)-binding residues include Glu275 and Asn277.

The protein belongs to the prokaryotic GSH synthase family. Requires Mg(2+) as cofactor. It depends on Mn(2+) as a cofactor.

The enzyme catalyses gamma-L-glutamyl-L-cysteine + glycine + ATP = glutathione + ADP + phosphate + H(+). Its pathway is sulfur metabolism; glutathione biosynthesis; glutathione from L-cysteine and L-glutamate: step 2/2. This chain is Glutathione synthetase, found in Parasynechococcus marenigrum (strain WH8102).